We begin with the raw amino-acid sequence, 266 residues long: Vitamin B12-binding protein (266 aa).

The first 22 residues, 1–22 (MAKQMFRALVALLLTLPVWLYA), serve as a signal peptide directing secretion. The Fe/B12 periplasmic-binding domain occupies 25–266 (RVITLSPANT…QLCNALSQVN (242 aa)). Residues Tyr50 and 242-246 (DWFER) contribute to the cyanocob(III)alamin site. An intrachain disulfide couples Cys183 to Cys259.

Belongs to the BtuF family. As to quaternary structure, the complex is composed of two ATP-binding proteins (BtuD), two transmembrane proteins (BtuC) and a solute-binding protein (BtuF).

It localises to the periplasm. Part of the ABC transporter complex BtuCDF involved in vitamin B12 import. Binds vitamin B12 and delivers it to the periplasmic surface of BtuC. This is Vitamin B12-binding protein from Salmonella paratyphi A (strain ATCC 9150 / SARB42).